We begin with the raw amino-acid sequence, 352 residues long: AP2/ERF and B3 domain-containing transcription factor At1g51120 (352 aa).

Residues 1 to 20 (MDEMSNVAKTTTETSGLTDS) form a disordered region. Positions 7 to 20 (VAKTTTETSGLTDS) are enriched in polar residues. The AP2/ERF DNA-binding region spans 46–103 (KFKGVVQQQNGHWGAQIYADHRRIWLGTFKSAHEAAAAYDSASIKLRSFDANSHRNFP). The segment at residues 178–297 (FQKELTPSDV…KTFLMIDVHH (120 aa)) is a DNA-binding region (TF-B3).

Belongs to the AP2/ERF transcription factor family. RAV subfamily.

The protein localises to the nucleus. Its function is as follows. Probably acts as a transcriptional activator. Binds to the GCC-box pathogenesis-related promoter element. May be involved in the regulation of gene expression by stress factors and by components of stress signal transduction pathways. The protein is AP2/ERF and B3 domain-containing transcription factor At1g51120 of Arabidopsis thaliana (Mouse-ear cress).